Consider the following 30-residue polypeptide: ATP-dependent Clp protease ATP-binding subunit ClpA homolog (30 aa).

It belongs to the ClpA/ClpB family.

It is found in the plastid. The protein resides in the chloroplast. Functionally, may interact with a ClpP-like protease involved in degradation of denatured proteins in the chloroplast. The sequence is that of ATP-dependent Clp protease ATP-binding subunit ClpA homolog from Pinus pinaster (Maritime pine).